Here is a 117-residue protein sequence, read N- to C-terminus: Putative membrane protein insertion efficiency factor (117 aa).

It belongs to the UPF0161 family.

Its subcellular location is the cell inner membrane. Its function is as follows. Could be involved in insertion of integral membrane proteins into the membrane. The protein is Putative membrane protein insertion efficiency factor of Bartonella henselae (strain ATCC 49882 / DSM 28221 / CCUG 30454 / Houston 1) (Rochalimaea henselae).